Reading from the N-terminus, the 434-residue chain is APETALA2-like protein 2 (434 aa).

A disordered region spans residues 1–116 (MLLDLNVESP…KTRRGPRSRS (116 aa)). Positions 12–23 (RSGTSSSSVLNS) are enriched in low complexity. Over residues 25–38 (DAGGGGGGGGGGGL) the composition is skewed to gly residues. Positions 72–87 (LPPPPPAAPSPAPAWQ) are enriched in pro residues. Residues 104–113 (VAKKTRRGPR) are compositionally biased toward basic residues. Positions 106–115 (KKTRRGPRSR) match the Nuclear localization signal motif. 2 DNA-binding regions (AP2/ERF) span residues 118–174 (QYRG…INFN) and 210–267 (KFRG…TNFE). An EAR motif is present at residues 291–295 (LDLRI).

Belongs to the AP2/ERF transcription factor family. AP2 subfamily. As to quaternary structure, may form homodimer. Interacts with TPR2/ASP1.

Its subcellular location is the nucleus. Probable transcription factor. Involved in spikelet transition. Together with SNB, controls synergistically inflorescence architecture and floral meristem establishment via the regulation of spatio-temporal expression of B- and E-function floral organ identity genes in the lodicules and of spikelet meristem genes. Prevents lemma and palea elongation as well as grain growth. The polypeptide is APETALA2-like protein 2 (Oryza sativa subsp. indica (Rice)).